An 838-amino-acid chain; its full sequence is Histidine biosynthesis trifunctional protein (838 aa).

The tract at residues 1 to 271 (MIFPILPVIS…MVEPRTGYGF (271 aa)) is phosphoribosyl-AMP cyclohydrolase. Residues 272 to 360 (CHRETKFTCF…VYFAMVWCIK (89 aa)) are phosphoribosyl-ATP pyrophosphohydrolase. The histidinol dehydrogenase stretch occupies residues 361 to 838 (HGVRLADIEK…IRMERMAETK (478 aa)). The Zn(2+) site is built by Gln660 and His663. Active-site residues include Glu729 and His730. Asp764 and His823 together coordinate Zn(2+).

It in the C-terminal section; belongs to the histidinol dehydrogenase family. Zn(2+) serves as cofactor.

The enzyme catalyses 1-(5-phospho-beta-D-ribosyl)-5'-AMP + H2O = 1-(5-phospho-beta-D-ribosyl)-5-[(5-phospho-beta-D-ribosylamino)methylideneamino]imidazole-4-carboxamide. The catalysed reaction is 1-(5-phospho-beta-D-ribosyl)-ATP + H2O = 1-(5-phospho-beta-D-ribosyl)-5'-AMP + diphosphate + H(+). It catalyses the reaction L-histidinol + 2 NAD(+) + H2O = L-histidine + 2 NADH + 3 H(+). It participates in amino-acid biosynthesis; L-histidine biosynthesis; L-histidine from 5-phospho-alpha-D-ribose 1-diphosphate: step 2/9. The protein operates within amino-acid biosynthesis; L-histidine biosynthesis; L-histidine from 5-phospho-alpha-D-ribose 1-diphosphate: step 3/9. It functions in the pathway amino-acid biosynthesis; L-histidine biosynthesis; L-histidine from 5-phospho-alpha-D-ribose 1-diphosphate: step 9/9. The chain is Histidine biosynthesis trifunctional protein (HIS4) from Candida albicans (Yeast).